Consider the following 163-residue polypeptide: Probable ribosome biogenesis protein RLP24 (163 aa).

The protein belongs to the eukaryotic ribosomal protein eL24 family. As to quaternary structure, associated with nucleolar and cytoplasmic pre-60S particles. At the end of biogenesis it dissociates from cytoplasmic pre-60S particles and is likely to be exchanged for its ribosomal homolog, RPL24.

The protein resides in the nucleus. It localises to the nucleolus. Involved in the biogenesis of the 60S ribosomal subunit. Ensures the docking of GTPBP4/NOG1 to pre-60S particles. This is Probable ribosome biogenesis protein RLP24 (RSL24D1) from Bos taurus (Bovine).